The following is a 571-amino-acid chain: Urease subunit alpha (571 aa).

In terms of domain architecture, Urease spans 129-571 (GGIDTHIHFI…LPMAQRYFLF (443 aa)). H134, H136, and K217 together coordinate Ni(2+). An N6-carboxylysine modification is found at K217. H219 is a substrate binding site. Ni(2+) is bound by residues H246 and H272. Residue H320 is the Proton donor of the active site. D360 lines the Ni(2+) pocket.

This sequence belongs to the metallo-dependent hydrolases superfamily. Urease alpha subunit family. As to quaternary structure, heterotrimer of UreA (gamma), UreB (beta) and UreC (alpha) subunits. Three heterotrimers associate to form the active enzyme. Requires Ni cation as cofactor. In terms of processing, carboxylation allows a single lysine to coordinate two nickel ions.

The protein localises to the cytoplasm. It carries out the reaction urea + 2 H2O + H(+) = hydrogencarbonate + 2 NH4(+). It participates in nitrogen metabolism; urea degradation; CO(2) and NH(3) from urea (urease route): step 1/1. The sequence is that of Urease subunit alpha from Cupriavidus pinatubonensis (strain JMP 134 / LMG 1197) (Cupriavidus necator (strain JMP 134)).